Consider the following 524-residue polypeptide: 2-isopropylmalate synthase (524 aa).

The region spanning 12-274 is the Pyruvate carboxyltransferase domain; it reads VIIFDTTLRD…WNRIETTMLT (263 aa). Mn(2+) is bound by residues Asp21, His209, His211, and Asn245. The regulatory domain stretch occupies residues 398–524; it reads KLMSLTVIAG…EDAPTVAVAG (127 aa).

The protein belongs to the alpha-IPM synthase/homocitrate synthase family. LeuA type 1 subfamily. Homodimer. It depends on Mn(2+) as a cofactor.

It is found in the cytoplasm. The enzyme catalyses 3-methyl-2-oxobutanoate + acetyl-CoA + H2O = (2S)-2-isopropylmalate + CoA + H(+). Its pathway is amino-acid biosynthesis; L-leucine biosynthesis; L-leucine from 3-methyl-2-oxobutanoate: step 1/4. Its function is as follows. Catalyzes the condensation of the acetyl group of acetyl-CoA with 3-methyl-2-oxobutanoate (2-ketoisovalerate) to form 3-carboxy-3-hydroxy-4-methylpentanoate (2-isopropylmalate). In Rhodopseudomonas palustris (strain TIE-1), this protein is 2-isopropylmalate synthase.